A 271-amino-acid polypeptide reads, in one-letter code: MTTEKPLNLLISNDDGIFALGVRTLANTLAKAGHQVTVVCPDRERSATGHGLTLHQPIRAQIVEGIFDPQVTAWSCSGTPSDCIKFALSAVLFTRPDFVLSGINHGSNLGTDILYSGTVSAAMEGLIDGITSIALSLTSFSSQDFQPAANFAVDLIAKLARHPLPQPTLLNVNVPPVKSEDMAGVKLTRQGLRRYRENFEKRLDPRGKSYYWLVGEVIEEIEQPDHLHLPGHIPTDVQAIGDNYITITPLQYNLTDVQGFSDLNQTQWFDP.

Positions 14, 15, 46, and 104 each coordinate a divalent metal cation.

This sequence belongs to the SurE nucleotidase family. A divalent metal cation serves as cofactor.

Its subcellular location is the cytoplasm. It catalyses the reaction a ribonucleoside 5'-phosphate + H2O = a ribonucleoside + phosphate. In terms of biological role, nucleotidase that shows phosphatase activity on nucleoside 5'-monophosphates. The polypeptide is 5'-nucleotidase SurE (Gloeothece citriformis (strain PCC 7424) (Cyanothece sp. (strain PCC 7424))).